The sequence spans 242 residues: UPF0273 protein TM_0370 (242 aa).

The region spanning 3-242 (KRVKTGIPGM…IYPSEGGEGR (240 aa)) is the KaiC domain. An ATP-binding site is contributed by 30–37 (GGPGTGKT).

The protein belongs to the UPF0273 family.

In Thermotoga maritima (strain ATCC 43589 / DSM 3109 / JCM 10099 / NBRC 100826 / MSB8), this protein is UPF0273 protein TM_0370.